We begin with the raw amino-acid sequence, 109 residues long: Flagellar hook-basal body complex protein FliE (109 aa).

Positions 1 to 38 (MQAIHNDKSLLSPFSELNTDNRTKREESGNAFKEQKGG) are disordered. A compositionally biased stretch (basic and acidic residues) spans 19 to 38 (TDNRTKREESGNAFKEQKGG).

The protein belongs to the FliE family.

It is found in the bacterial flagellum basal body. This chain is Flagellar hook-basal body complex protein FliE, found in Helicobacter pylori (strain G27).